Here is a 121-residue protein sequence, read N- to C-terminus: MQSNQLDYLPIFMQMGLAVGFVVLTIIGSSFLGPKRSSVNKDKNFESGIESIGNARVPFSVKYFLVAILFVLFDVEVIFLYPWAINFQELGMQGMIKMVIFMSLLLVGFFYIIKKKALEWD.

The next 3 helical transmembrane spans lie at 8–28, 65–85, and 93–113; these read YLPIFMQMGLAVGFVVLTIIG, LVAILFVLFDVEVIFLYPWAI, and QGMIKMVIFMSLLLVGFFYII.

Belongs to the complex I subunit 3 family. NDH-1 is composed of 14 different subunits. Subunits NuoA, H, J, K, L, M, N constitute the membrane sector of the complex.

It localises to the cell inner membrane. It catalyses the reaction a quinone + NADH + 5 H(+)(in) = a quinol + NAD(+) + 4 H(+)(out). NDH-1 shuttles electrons from NADH, via FMN and iron-sulfur (Fe-S) centers, to quinones in the respiratory chain. The immediate electron acceptor for the enzyme in this species is believed to be a menaquinone. Couples the redox reaction to proton translocation (for every two electrons transferred, four hydrogen ions are translocated across the cytoplasmic membrane), and thus conserves the redox energy in a proton gradient. The sequence is that of NADH-quinone oxidoreductase subunit A from Flavobacterium psychrophilum (strain ATCC 49511 / DSM 21280 / CIP 103535 / JIP02/86).